The sequence spans 379 residues: Sulfate adenylyltransferase (379 aa).

This sequence belongs to the sulfate adenylyltransferase family.

The enzyme catalyses sulfate + ATP + H(+) = adenosine 5'-phosphosulfate + diphosphate. It functions in the pathway sulfur metabolism; hydrogen sulfide biosynthesis; sulfite from sulfate: step 1/3. The polypeptide is Sulfate adenylyltransferase (Thermococcus onnurineus (strain NA1)).